The sequence spans 102 residues: ATP-dependent Clp protease adapter protein ClpS (102 aa).

The protein belongs to the ClpS family. As to quaternary structure, binds to the N-terminal domain of the chaperone ClpA.

In terms of biological role, involved in the modulation of the specificity of the ClpAP-mediated ATP-dependent protein degradation. The polypeptide is ATP-dependent Clp protease adapter protein ClpS (Shewanella sp. (strain ANA-3)).